The chain runs to 137 residues: MDYTLRRRSLLAEVYSGRTGVSEVCDANPYLLRAAKFHGKPSRVICPICRKEQLTLVSWVFGEHLGAVSGSARTAEELILLATRFSEFAVHVVEVCRTCSWNHLVKSYVLGAARPARPPRGSGGTRTARNGARTASE.

A disordered region spans residues 116–137 (ARPPRGSGGTRTARNGARTASE). A compositionally biased stretch (polar residues) spans 125-137 (TRTARNGARTASE).

This is an uncharacterized protein from Mycobacterium bovis (strain ATCC BAA-935 / AF2122/97).